The chain runs to 387 residues: Thermostable celloxylanase (387 aa).

One can recognise a GH10 domain in the interval 41–382; that stretch reads AEDIPSLAEA…KPAFWAIVDP (342 aa). E185 functions as the Proton donor in the catalytic mechanism. Residue E293 is the Nucleophile of the active site.

The protein belongs to the glycosyl hydrolase 10 (cellulase F) family.

The catalysed reaction is Endohydrolysis of (1-&gt;4)-beta-D-glucosidic linkages in cellulose, lichenin and cereal beta-D-glucans.. The enzyme catalyses Endohydrolysis of (1-&gt;4)-beta-D-xylosidic linkages in xylans.. The protein operates within glycan degradation; xylan degradation. Its function is as follows. Active toward xylan, carboxymethylcellulose, P-nitrophenyl-beta-D-xylopyranoside and P-nitrophenyl-beta-D-cellobioside. This is Thermostable celloxylanase (xynB) from Thermoclostridium stercorarium (Clostridium stercorarium).